Reading from the N-terminus, the 80-residue chain is Bowman-Birk type proteinase inhibitor (80 aa).

Disulfide bonds link Cys19–Cys70, Cys20–Cys35, Cys23–Cys66, Cys25–Cys33, Cys41–Cys47, Cys44–Cys59, and Cys49–Cys57.

Occurs as a monomer, dimer or trimer. The dimer may be the active form. Post-translationally, binds calcium, probably through His-3 to His-6.

Functionally, protease inhibitor with activity against cysteine, aspartic and serine proteases. Highest activity against serine proteases, in particular trypsin and trypsin-like proteases. The protein is Bowman-Birk type proteinase inhibitor of Phaseolus acutifolius (Tepary bean).